The primary structure comprises 426 residues: tRNA(Ile)-lysidine synthase (426 aa).

21–26 (SGGLDS) lines the ATP pocket.

Belongs to the tRNA(Ile)-lysidine synthase family.

It localises to the cytoplasm. It carries out the reaction cytidine(34) in tRNA(Ile2) + L-lysine + ATP = lysidine(34) in tRNA(Ile2) + AMP + diphosphate + H(+). Its function is as follows. Ligates lysine onto the cytidine present at position 34 of the AUA codon-specific tRNA(Ile) that contains the anticodon CAU, in an ATP-dependent manner. Cytidine is converted to lysidine, thus changing the amino acid specificity of the tRNA from methionine to isoleucine. This Enterobacter sp. (strain 638) protein is tRNA(Ile)-lysidine synthase.